Consider the following 479-residue polypeptide: Shugoshin (479 aa).

Residues 36–76 adopt a coiled-coil conformation; it reads SLRIRSLESEVSNLLSENVSLREQIITLTQELERFEAARTL. Disordered regions lie at residues 109 to 145, 220 to 247, and 263 to 479; these read SRAV…GFLD, EHSL…QADT, and AKRK…SMPP. Positions 123–132 are enriched in basic and acidic residues; it reads QSRESGPKEV. Residues 270–286 show a composition bias toward acidic residues; it reads EDDESLFESSPSEDDEF. 2 stretches are compositionally biased toward polar residues: residues 290-303 and 318-328; these read RPAQ…QNEH and QSPTLSSQNDH. Basic and acidic residues-rich tracts occupy residues 335–352 and 379–388; these read PQSE…RVLE and GYNEKSEKPL. Residues 400 to 411 are compositionally biased toward polar residues; the sequence is KNASPKKSSTRT.

This sequence belongs to the shugoshin family.

It is found in the nucleus. It localises to the chromosome. The protein localises to the centromere. In terms of biological role, plays a central role in chromosome cohesion during cell division by preventing premature dissociation of cohesin complex from centromeres after prophase, when most of cohesin complex dissociates from chromosomes arms. In Emericella nidulans (strain FGSC A4 / ATCC 38163 / CBS 112.46 / NRRL 194 / M139) (Aspergillus nidulans), this protein is Shugoshin (sgo1).